The following is a 148-amino-acid chain: Respiratory supercomplex factor 1, mitochondrial (148 aa).

The 92-residue stretch at 9-100 folds into the HIG1 domain; the sequence is LPSSFDAHPE…QERKQRKEFE (92 aa). 2 helical membrane-spanning segments follow: residues 36 to 53 and 72 to 89; these read PLIP…WRAY and IYGH…GIYY. Positions 89-148 form a coiled coil; the sequence is YGQERKQRKEFEKALQEKQDQEKRDAWLRELEVRDKEDKDWRQRHAAMEMAAKEAEKKMG.

Belongs to the RCF1 family. Associates with the respiratory chain complex III/complex IV supercomplex.

The protein localises to the mitochondrion membrane. Functionally, cytochrome c oxidase subunit which plays a role in assembly of respiratory supercomplexes. In Ajellomyces dermatitidis (strain ER-3 / ATCC MYA-2586) (Blastomyces dermatitidis), this protein is Respiratory supercomplex factor 1, mitochondrial (RCF1).